The primary structure comprises 95 residues: Large ribosomal subunit protein uL23 (95 aa).

The protein belongs to the universal ribosomal protein uL23 family. In terms of assembly, part of the 50S ribosomal subunit. Contacts protein L29, and trigger factor when it is bound to the ribosome.

Its function is as follows. One of the early assembly proteins it binds 23S rRNA. One of the proteins that surrounds the polypeptide exit tunnel on the outside of the ribosome. Forms the main docking site for trigger factor binding to the ribosome. This is Large ribosomal subunit protein uL23 from Heliobacterium modesticaldum (strain ATCC 51547 / Ice1).